Consider the following 334-residue polypeptide: 6-phosphogluconolactonase (334 aa).

It belongs to the cycloisomerase 2 family.

The catalysed reaction is 6-phospho-D-glucono-1,5-lactone + H2O = 6-phospho-D-gluconate + H(+). Its pathway is carbohydrate degradation; pentose phosphate pathway; D-ribulose 5-phosphate from D-glucose 6-phosphate (oxidative stage): step 2/3. Its function is as follows. Catalyzes the hydrolysis of 6-phosphogluconolactone to 6-phosphogluconate. This Yersinia pseudotuberculosis serotype O:1b (strain IP 31758) protein is 6-phosphogluconolactonase.